Reading from the N-terminus, the 336-residue chain is DNA-directed RNA polymerase subunit alpha (336 aa).

The alpha N-terminal domain (alpha-NTD) stretch occupies residues 1–232; the sequence is MIQKNWQELI…DQLGVFVNFD (232 aa). The segment at 248 to 336 is alpha C-terminal domain (alpha-CTD); the sequence is FNPALLKKVD…DLAKRYEDQY (89 aa).

The protein belongs to the RNA polymerase alpha chain family. In terms of assembly, homodimer. The RNAP catalytic core consists of 2 alpha, 1 beta, 1 beta' and 1 omega subunit. When a sigma factor is associated with the core the holoenzyme is formed, which can initiate transcription.

It carries out the reaction RNA(n) + a ribonucleoside 5'-triphosphate = RNA(n+1) + diphosphate. DNA-dependent RNA polymerase catalyzes the transcription of DNA into RNA using the four ribonucleoside triphosphates as substrates. The chain is DNA-directed RNA polymerase subunit alpha from Rhizobium rhizogenes (strain K84 / ATCC BAA-868) (Agrobacterium radiobacter).